The sequence spans 217 residues: Killer cell lectin-like receptor subfamily B member 1F (217 aa).

Over 1–45 (MDTSKVHGNVKPFRCPGYKQASSPSFSPDACRCPHWHHLALKSGC) the chain is Cytoplasmic. An LCK-binding motif motif is present at residues 31 to 34 (CRCP). A helical; Signal-anchor for type II membrane protein transmembrane segment spans residues 46-66 (AGLILLLLSLIGLSVLVRFLV). The Extracellular portion of the chain corresponds to 67-217 (QKPPIEKCSV…WICQKTLIHV (151 aa)). A glycan (N-linked (GlcNAc...) asparagine) is linked at N81. The 111-residue stretch at 101 to 211 (HWNKCLFVSQ…CSSDNHWICQ (111 aa)) folds into the C-type lectin domain. 2 disulfide bridges follow: C122-C210 and C189-C202.

Highly expressed in dendritic cells. Detectable in natural killer cells.

It localises to the membrane. Binds CLEC2I/Clr-g leading to activation of natural killer cells or costimulation of IL-2 production and proliferation of T-cells in response to antigen stimulation. May contribute to the formation of the immunological synapse between T-cells and antigen-presenting dendritic cells. This chain is Killer cell lectin-like receptor subfamily B member 1F (Klrb1f), found in Mus musculus (Mouse).